The following is a 239-amino-acid chain: Fatty acid metabolism regulator protein (239 aa).

One can recognise an HTH gntR-type domain in the interval 6–74; the sequence is KGPASFAEKY…HGKPTQVNNF (69 aa). The segment at residues 34-53 is a DNA-binding region (H-T-H motif); that stretch reads ERELSELIGVTRTTLREVLQ.

As to quaternary structure, homodimer.

Its subcellular location is the cytoplasm. Multifunctional regulator of fatty acid metabolism. In Shewanella frigidimarina (strain NCIMB 400), this protein is Fatty acid metabolism regulator protein.